We begin with the raw amino-acid sequence, 118 residues long: Small ribosomal subunit protein uS13 (118 aa).

The tract at residues 94 to 118 (SLPVRGQRTKTNARTRKGPRKAIKK) is disordered.

Belongs to the universal ribosomal protein uS13 family. Part of the 30S ribosomal subunit. Forms a loose heterodimer with protein S19. Forms two bridges to the 50S subunit in the 70S ribosome.

Located at the top of the head of the 30S subunit, it contacts several helices of the 16S rRNA. In the 70S ribosome it contacts the 23S rRNA (bridge B1a) and protein L5 of the 50S subunit (bridge B1b), connecting the 2 subunits; these bridges are implicated in subunit movement. Contacts the tRNAs in the A and P-sites. The sequence is that of Small ribosomal subunit protein uS13 from Aeromonas hydrophila subsp. hydrophila (strain ATCC 7966 / DSM 30187 / BCRC 13018 / CCUG 14551 / JCM 1027 / KCTC 2358 / NCIMB 9240 / NCTC 8049).